Here is a 416-residue protein sequence, read N- to C-terminus: Gamma-glutamyl phosphate reductase (416 aa).

The protein belongs to the gamma-glutamyl phosphate reductase family.

Its subcellular location is the cytoplasm. It catalyses the reaction L-glutamate 5-semialdehyde + phosphate + NADP(+) = L-glutamyl 5-phosphate + NADPH + H(+). It functions in the pathway amino-acid biosynthesis; L-proline biosynthesis; L-glutamate 5-semialdehyde from L-glutamate: step 2/2. Catalyzes the NADPH-dependent reduction of L-glutamate 5-phosphate into L-glutamate 5-semialdehyde and phosphate. The product spontaneously undergoes cyclization to form 1-pyrroline-5-carboxylate. The chain is Gamma-glutamyl phosphate reductase from Halalkalibacterium halodurans (strain ATCC BAA-125 / DSM 18197 / FERM 7344 / JCM 9153 / C-125) (Bacillus halodurans).